The primary structure comprises 560 residues: Putative transport protein VFMJ11_0927 (560 aa).

5 consecutive transmembrane segments (helical) span residues 8–28 (LLSQ…LFIA), 37–57 (LGSS…GYTF), 66–86 (FMLF…GIFL), 94–114 (LLVL…GHYF), and 161–181 (NLSV…ILLA). RCK C-terminal domains are found at residues 203–292 (RGIG…FRNG) and 293–376 (KEVF…KIGF). A run of 5 helical transmembrane segments spans residues 386–406 (LLAF…TMSF), 409–429 (VTFG…LGFL), 451–471 (GLLV…NEYF), 478–498 (VLAA…LVGA), and 539–559 (AGTY…MILL).

The protein belongs to the AAE transporter (TC 2.A.81) family. YbjL subfamily.

It localises to the cell membrane. This is Putative transport protein VFMJ11_0927 from Aliivibrio fischeri (strain MJ11) (Vibrio fischeri).